Consider the following 260-residue polypeptide: Pyridoxine 5'-phosphate synthase (260 aa).

Asparagine 15 contacts 3-amino-2-oxopropyl phosphate. Residue 17–18 (DH) coordinates 1-deoxy-D-xylulose 5-phosphate. Arginine 26 is a binding site for 3-amino-2-oxopropyl phosphate. The active-site Proton acceptor is the histidine 51. 1-deoxy-D-xylulose 5-phosphate contacts are provided by arginine 53 and histidine 58. Glutamate 78 serves as the catalytic Proton acceptor. Threonine 108 contributes to the 1-deoxy-D-xylulose 5-phosphate binding site. Histidine 199 acts as the Proton donor in catalysis. 3-amino-2-oxopropyl phosphate contacts are provided by residues glycine 200 and 221 to 222 (GH).

The protein belongs to the PNP synthase family. Homooctamer; tetramer of dimers.

It is found in the cytoplasm. It carries out the reaction 3-amino-2-oxopropyl phosphate + 1-deoxy-D-xylulose 5-phosphate = pyridoxine 5'-phosphate + phosphate + 2 H2O + H(+). It functions in the pathway cofactor biosynthesis; pyridoxine 5'-phosphate biosynthesis; pyridoxine 5'-phosphate from D-erythrose 4-phosphate: step 5/5. Its function is as follows. Catalyzes the complicated ring closure reaction between the two acyclic compounds 1-deoxy-D-xylulose-5-phosphate (DXP) and 3-amino-2-oxopropyl phosphate (1-amino-acetone-3-phosphate or AAP) to form pyridoxine 5'-phosphate (PNP) and inorganic phosphate. The protein is Pyridoxine 5'-phosphate synthase of Cupriavidus necator (strain ATCC 17699 / DSM 428 / KCTC 22496 / NCIMB 10442 / H16 / Stanier 337) (Ralstonia eutropha).